The chain runs to 243 residues: MTAAIEKQALLYTGKAKAMYATNDPEILWVEYLDQATALNGKRKVPIDQKGRLNNRIASLIFKDLANHGIANHFIEQPSDYVQLVRRVTMIPLETVVRNAASGSFERKFAVPHLTKFAEPVLEFFYKSDQLDDPFINDSQIHALNVATPAIVAEIKRQALQVNQRLTAIFAAMGVQLVDFKIEFGLTTTGKVLLADEISPDSCRLVDLKTGASLDKDVFRKDLGDLTSVYQEVLTRLATVEEA.

Belongs to the SAICAR synthetase family.

It carries out the reaction 5-amino-1-(5-phospho-D-ribosyl)imidazole-4-carboxylate + L-aspartate + ATP = (2S)-2-[5-amino-1-(5-phospho-beta-D-ribosyl)imidazole-4-carboxamido]succinate + ADP + phosphate + 2 H(+). It functions in the pathway purine metabolism; IMP biosynthesis via de novo pathway; 5-amino-1-(5-phospho-D-ribosyl)imidazole-4-carboxamide from 5-amino-1-(5-phospho-D-ribosyl)imidazole-4-carboxylate: step 1/2. The chain is Phosphoribosylaminoimidazole-succinocarboxamide synthase from Lactiplantibacillus plantarum (strain ATCC BAA-793 / NCIMB 8826 / WCFS1) (Lactobacillus plantarum).